Here is a 742-residue protein sequence, read N- to C-terminus: Synaptic vesicle glycoprotein 2A (742 aa).

The interval methionine 1–aspartate 57 is interaction with SYT1. Topologically, residues methionine 1–tyrosine 169 are cytoplasmic. Basic and acidic residues predominate over residues glutamate 40–phenylalanine 49. Residues glutamate 40 to arginine 145 are disordered. Serine 80 and serine 81 each carry phosphoserine. A Phosphothreonine modification is found at threonine 84. The span at valine 122–glycine 137 shows a compositional bias: gly residues. Position 127 is a phosphoserine (serine 127). Residues phenylalanine 170–leucine 190 form a helical membrane-spanning segment. Topologically, residues proline 191–glycine 205 are extracellular. Residues methionine 206–alanine 226 form a helical membrane-spanning segment. At aspartate 227–glutamine 233 the chain is on the cytoplasmic side. A helical membrane pass occupies residues cysteine 234 to glycine 254. The Extracellular segment spans residues tyrosine 255 to arginine 262. A helical transmembrane segment spans residues leucine 263–phenylalanine 283. Over leucine 284 to serine 294 the chain is Cytoplasmic. A helical membrane pass occupies residues tryptophan 295–isoleucine 315. Topologically, residues proline 316–arginine 334 are extracellular. The chain crosses the membrane as a helical span at residues valine 335–proline 355. Residues glutamate 356–threonine 447 are Cytoplasmic-facing. Serine 393 is modified (phosphoserine). The chain crosses the membrane as a helical span at residues leucine 448 to phenylalanine 468. The Extracellular portion of the chain corresponds to proline 469 to tyrosine 598. Tyrosine 480 is subject to Phosphotyrosine. Asparagine 498, asparagine 548, and asparagine 573 each carry an N-linked (GlcNAc...) asparagine glycan. Residues phenylalanine 599 to methionine 619 traverse the membrane as a helical segment. At aspartate 620–arginine 626 the chain is on the cytoplasmic side. Residues methionine 627–serine 647 traverse the membrane as a helical segment. The Extracellular portion of the chain corresponds to glutamate 648–methionine 651. A helical transmembrane segment spans residues isoleucine 652 to leucine 672. The Cytoplasmic portion of the chain corresponds to threonine 673–alanine 685. The chain crosses the membrane as a helical span at residues phenylalanine 686–valine 708. Residues glycine 709–lysine 712 are Extracellular-facing. Residues alanine 713–leucine 731 form a helical membrane-spanning segment. At lysine 732–glutamine 742 the chain is on the cytoplasmic side.

It belongs to the major facilitator superfamily. In terms of assembly, interacts with SYT1/synaptotagmin-1 in a calcium-dependent manner. Binds the adapter protein complex AP-2. As to quaternary structure, (Microbial infection) Interacts with C.botulinum neurotoxin type A (BoNT/A, botA). In terms of processing, phosphorylation by CK1 of the N-terminal cytoplasmic domain regulates interaction with SYT1. N-glycosylated. Expressed in conventional synapses and cone ribbon synapses in the retina (at protein level). Expressed in diaphragm motor nerve terminals (at protein level). Expressed in hippocampus neurons (at protein level).

The protein resides in the presynapse. It is found in the cytoplasmic vesicle. It localises to the secretory vesicle. Its subcellular location is the synaptic vesicle membrane. In terms of biological role, plays a role in the control of regulated secretion in neural and endocrine cells, enhancing selectively low-frequency neurotransmission. Positively regulates vesicle fusion by maintaining the readily releasable pool of secretory vesicles. (Microbial infection) Receptor for C.botulinum neurotoxin type A (BoNT/A, botA); the toxin probably binds via extracellular loop 4. Its function is as follows. (Microbial infection) Possible receptor for C.botulinum neurotoxin type D (BoNT/D, botD); BoNT/D does not bind to extracellular loop 4 as do BoNT/A and BoNT/E. Functionally, (Microbial infection) Receptor for C.botulinum neurotoxin type E (BoNT/E); the toxin probably binds via extracellular loop 4. It probably requires glycosylation of Asn-573. The polypeptide is Synaptic vesicle glycoprotein 2A (Sv2a) (Mus musculus (Mouse)).